Reading from the N-terminus, the 165-residue chain is Nucleotide-binding protein Tfu_2672 (165 aa).

Belongs to the YajQ family.

Its function is as follows. Nucleotide-binding protein. In Thermobifida fusca (strain YX), this protein is Nucleotide-binding protein Tfu_2672.